We begin with the raw amino-acid sequence, 501 residues long: G protein-activated inward rectifier potassium channel 1 (501 aa).

A disordered region spans residues 1–40 (MSALRRKFGDDYQVVTTSSSGSGLQPQGPGQDPQQQLVPK). At 1-80 (MSALRRKFGD…LFTTLVDLKW (80 aa)) the chain is on the cytoplasmic side. Low complexity predominate over residues 18-38 (SSSGSGLQPQGPGQDPQQQLV). The chain crosses the membrane as a helical span at residues 81-105 (RWNLFIFILTYTVAWLFMASMWWVI). Topologically, residues 106 to 129 (AYTRGDLNKAHVGNYTPCVANVYN) are extracellular. N119 is a glycosylation site (N-linked (GlcNAc...) asparagine). The helical; Pore-forming intramembrane region spans 130 to 141 (FPSAFLFFIETE). The segment at residues 142 to 148 (ATIGYGY) is an intramembrane region (pore-forming). A Selectivity filter motif is present at residues 143–148 (TIGYGY). Over 149 to 157 (RYITDKCPE) the chain is Extracellular. Residues 158-179 (GIILFLFQSILGSIVDAFLIGC) form a helical membrane-spanning segment. Over 180–501 (MFIKMSQPKK…LRKMNSDRFT (322 aa)) the chain is Cytoplasmic. The segment at 182–209 (IKMSQPKKRAETLMFSEHAVISMRDGKL) is polyphosphoinositide (PIP2)-binding. 2 positions are modified to phosphoserine: S385 and S424.

Belongs to the inward rectifier-type potassium channel (TC 1.A.2.1) family. KCNJ3 subfamily. In terms of assembly, associates with KCNJ5/GIRK4 or KCNJ6/GIRK2 to form a G-protein activated heteromultimer pore-forming unit. The resulting inward current is much larger. Associates with KCNJ9/GIRK3 to form a G-protein activated heteromultimer pore-forming unit.

It localises to the membrane. The catalysed reaction is K(+)(in) = K(+)(out). With respect to regulation, heteromultimer composed of KCNJ3/GIRK1 and KCNJ5/GIRK4 is activated by phosphatidylinositol 4,5 biphosphate (PtdIns(4,5)P2). In terms of biological role, inward rectifier potassium channels are characterized by a greater tendency to allow potassium to flow into the cell rather than out of it. Their voltage dependence is regulated by the concentration of extracellular potassium; as external potassium is raised, the voltage range of the channel opening shifts to more positive voltages. The inward rectification is mainly due to the blockage of outward current by internal magnesium. This potassium channel is controlled by G proteins. This receptor plays a crucial role in regulating the heartbeat. In Homo sapiens (Human), this protein is G protein-activated inward rectifier potassium channel 1 (KCNJ3).